We begin with the raw amino-acid sequence, 428 residues long: Trigger factor (428 aa).

The region spanning 166–250 (GDIVTFDFKG…IKNIKEKILP (85 aa)) is the PPIase FKBP-type domain.

Belongs to the FKBP-type PPIase family. Tig subfamily.

Its subcellular location is the cytoplasm. It catalyses the reaction [protein]-peptidylproline (omega=180) = [protein]-peptidylproline (omega=0). Involved in protein export. Acts as a chaperone by maintaining the newly synthesized protein in an open conformation. Functions as a peptidyl-prolyl cis-trans isomerase. The chain is Trigger factor from Mycoplasma capricolum subsp. capricolum (strain California kid / ATCC 27343 / NCTC 10154).